The sequence spans 210 residues: Ribosomal RNA small subunit methyltransferase G (210 aa).

Residues Gly76, Met81, 127-128 (VE), and Arg145 each bind S-adenosyl-L-methionine.

Belongs to the methyltransferase superfamily. RNA methyltransferase RsmG family.

It localises to the cytoplasm. The catalysed reaction is guanosine(527) in 16S rRNA + S-adenosyl-L-methionine = N(7)-methylguanosine(527) in 16S rRNA + S-adenosyl-L-homocysteine. Functionally, specifically methylates the N7 position of guanine in position 527 of 16S rRNA. This is Ribosomal RNA small subunit methyltransferase G from Acinetobacter baumannii (strain AB307-0294).